Reading from the N-terminus, the 361-residue chain is Phosphoserine aminotransferase (361 aa).

Arg-42 is a binding site for L-glutamate. Pyridoxal 5'-phosphate contacts are provided by residues Ala-76–Thr-77, Trp-102, Thr-152, Asp-172, and Gln-195. Lys-196 is modified (N6-(pyridoxal phosphate)lysine). Asn-237–Thr-238 provides a ligand contact to pyridoxal 5'-phosphate.

It belongs to the class-V pyridoxal-phosphate-dependent aminotransferase family. SerC subfamily. Homodimer. Pyridoxal 5'-phosphate serves as cofactor.

Its subcellular location is the cytoplasm. The enzyme catalyses O-phospho-L-serine + 2-oxoglutarate = 3-phosphooxypyruvate + L-glutamate. It catalyses the reaction 4-(phosphooxy)-L-threonine + 2-oxoglutarate = (R)-3-hydroxy-2-oxo-4-phosphooxybutanoate + L-glutamate. Its pathway is amino-acid biosynthesis; L-serine biosynthesis; L-serine from 3-phospho-D-glycerate: step 2/3. The protein operates within cofactor biosynthesis; pyridoxine 5'-phosphate biosynthesis; pyridoxine 5'-phosphate from D-erythrose 4-phosphate: step 3/5. Catalyzes the reversible conversion of 3-phosphohydroxypyruvate to phosphoserine and of 3-hydroxy-2-oxo-4-phosphonooxybutanoate to phosphohydroxythreonine. This chain is Phosphoserine aminotransferase, found in Xanthomonas euvesicatoria pv. vesicatoria (strain 85-10) (Xanthomonas campestris pv. vesicatoria).